Reading from the N-terminus, the 346-residue chain is N-acetyl-gamma-glutamyl-phosphate reductase (346 aa).

C150 is an active-site residue.

It belongs to the NAGSA dehydrogenase family. Type 1 subfamily.

The protein resides in the cytoplasm. The catalysed reaction is N-acetyl-L-glutamate 5-semialdehyde + phosphate + NADP(+) = N-acetyl-L-glutamyl 5-phosphate + NADPH + H(+). It functions in the pathway amino-acid biosynthesis; L-arginine biosynthesis; N(2)-acetyl-L-ornithine from L-glutamate: step 3/4. Functionally, catalyzes the NADPH-dependent reduction of N-acetyl-5-glutamyl phosphate to yield N-acetyl-L-glutamate 5-semialdehyde. This Moorella thermoacetica (strain ATCC 39073 / JCM 9320) protein is N-acetyl-gamma-glutamyl-phosphate reductase.